The following is a 288-amino-acid chain: NAD(P)H-hydrate epimerase (288 aa).

The transit peptide at 1–47 directs the protein to the mitochondrion; the sequence is MSRLRALLGLGLLVAGSRVPRIKSQTIACRSGPTWWGPQRLNSGGRW. At Ser-49 the chain carries Phosphoserine. Residues 65–275 form the YjeF N-terminal domain; that stretch reads AQAVDQELFN…ALEKKYQLNL (211 aa). 119–123 contacts (6S)-NADPHX; the sequence is NNGGD. Asn-120 serves as a coordination point for K(+). The residue at position 144 (Lys-144) is an N6-succinyllysine. Asp-185 contributes to the K(+) binding site. (6S)-NADPHX is bound by residues 189-195 and Asp-218; that span reads GFSFKGD. Ser-221 is a binding site for K(+).

Belongs to the NnrE/AIBP family. As to quaternary structure, homodimer. Interacts with APOA1 and APOA2. It depends on K(+) as a cofactor. In terms of processing, undergoes physiological phosphorylation during sperm capacitation, downstream to PKA activation. In terms of tissue distribution, ubiquitously expressed, with highest levels in kidney, heart and liver. Present in cerebrospinal fluid and urine but not in serum from healthy patients. Present in serum of sepsis patients (at protein level).

It is found in the mitochondrion. The protein localises to the secreted. The enzyme catalyses (6R)-NADHX = (6S)-NADHX. The catalysed reaction is (6R)-NADPHX = (6S)-NADPHX. Functionally, catalyzes the epimerization of the S- and R-forms of NAD(P)HX, a damaged form of NAD(P)H that is a result of enzymatic or heat-dependent hydration. This is a prerequisite for the S-specific NAD(P)H-hydrate dehydratase to allow the repair of both epimers of NAD(P)HX. Accelerates cholesterol efflux from endothelial cells to high-density lipoprotein (HDL) and thereby regulates angiogenesis. This Homo sapiens (Human) protein is NAD(P)H-hydrate epimerase.